Reading from the N-terminus, the 690-residue chain is Glycine--tRNA ligase beta subunit (690 aa).

Belongs to the class-II aminoacyl-tRNA synthetase family. Tetramer of two alpha and two beta subunits.

Its subcellular location is the cytoplasm. It catalyses the reaction tRNA(Gly) + glycine + ATP = glycyl-tRNA(Gly) + AMP + diphosphate. This chain is Glycine--tRNA ligase beta subunit, found in Syntrophus aciditrophicus (strain SB).